Consider the following 526-residue polypeptide: Glutamate--cysteine ligase (526 aa).

This sequence belongs to the glutamate--cysteine ligase type 1 family. Type 1 subfamily.

The catalysed reaction is L-cysteine + L-glutamate + ATP = gamma-L-glutamyl-L-cysteine + ADP + phosphate + H(+). Its pathway is sulfur metabolism; glutathione biosynthesis; glutathione from L-cysteine and L-glutamate: step 1/2. This chain is Glutamate--cysteine ligase, found in Proteus mirabilis (strain HI4320).